The primary structure comprises 148 residues: MKVILLEPLENLGDVGQVVDVKPGYARNYLLPRGLAVLATESNLKALEARIRAQAKRLAERKAEAERLKEILENLTLTIPVRAGETKIYGSVTAKDIAEALSRQHGVTIDPKRLALEKPIKELGEYVLTYKPHPEVPIQLKVSVVAQE.

As to quaternary structure, part of the 50S ribosomal subunit.

In terms of biological role, binds to the 23S rRNA. Extends more that 50 Angstroms beyond the surface of the 70S ribosome. This Thermus thermophilus (strain ATCC 27634 / DSM 579 / HB8) protein is Large ribosomal subunit protein bL9 (rplI).